The sequence spans 717 residues: Fatty acid oxidation complex subunit alpha (717 aa).

The segment at methionine 1–alanine 190 is enoyl-CoA hydratase/isomerase. Aspartate 298 serves as a coordination point for substrate. A 3-hydroxyacyl-CoA dehydrogenase region spans residues histidine 313–glycine 717. Residues methionine 326, aspartate 345, valine 402–glutamate 404, lysine 409, and serine 431 contribute to the NAD(+) site. Histidine 452 serves as the catalytic For 3-hydroxyacyl-CoA dehydrogenase activity. An NAD(+)-binding site is contributed by asparagine 455. A substrate-binding site is contributed by asparagine 502.

This sequence in the N-terminal section; belongs to the enoyl-CoA hydratase/isomerase family. In the C-terminal section; belongs to the 3-hydroxyacyl-CoA dehydrogenase family. Heterotetramer of two alpha chains (FadB) and two beta chains (FadA).

It carries out the reaction a (3S)-3-hydroxyacyl-CoA + NAD(+) = a 3-oxoacyl-CoA + NADH + H(+). The catalysed reaction is a (3S)-3-hydroxyacyl-CoA = a (2E)-enoyl-CoA + H2O. It catalyses the reaction a 4-saturated-(3S)-3-hydroxyacyl-CoA = a (3E)-enoyl-CoA + H2O. The enzyme catalyses (3S)-3-hydroxybutanoyl-CoA = (3R)-3-hydroxybutanoyl-CoA. It carries out the reaction a (3Z)-enoyl-CoA = a 4-saturated (2E)-enoyl-CoA. The catalysed reaction is a (3E)-enoyl-CoA = a 4-saturated (2E)-enoyl-CoA. The protein operates within lipid metabolism; fatty acid beta-oxidation. Its function is as follows. Involved in the aerobic and anaerobic degradation of long-chain fatty acids via beta-oxidation cycle. Catalyzes the formation of 3-oxoacyl-CoA from enoyl-CoA via L-3-hydroxyacyl-CoA. It can also use D-3-hydroxyacyl-CoA and cis-3-enoyl-CoA as substrate. In Acinetobacter baumannii (strain ACICU), this protein is Fatty acid oxidation complex subunit alpha.